The sequence spans 82 residues: Turripeptide IX-23 (82 aa).

The N-terminal stretch at 1–23 (MMAKLMITVMMVLLLSLQQGADG) is a signal peptide. A propeptide spanning residues 24–50 (RSERWRKNQMAASSIMRNLITARIDPP) is cleaved from the precursor. Cystine bridges form between Cys53–Cys68, Cys58–Cys72, and Cys64–Cys79.

Belongs to the Pg turripeptide superfamily. Expressed by the venom duct.

It localises to the secreted. This chain is Turripeptide IX-23, found in Gemmula speciosa (Splendid gem-turris).